Consider the following 293-residue polypeptide: Elongation factor Ts (293 aa).

The tract at residues 79 to 82 (TDFV) is involved in Mg(2+) ion dislocation from EF-Tu.

The protein belongs to the EF-Ts family.

The protein localises to the cytoplasm. Functionally, associates with the EF-Tu.GDP complex and induces the exchange of GDP to GTP. It remains bound to the aminoacyl-tRNA.EF-Tu.GTP complex up to the GTP hydrolysis stage on the ribosome. The sequence is that of Elongation factor Ts from Bacillus velezensis (strain DSM 23117 / BGSC 10A6 / LMG 26770 / FZB42) (Bacillus amyloliquefaciens subsp. plantarum).